We begin with the raw amino-acid sequence, 381 residues long: Ecotin-like protein 3 (381 aa).

A disordered region spans residues E232–K381. Over residues N273 to N292 the composition is skewed to polar residues. Over residues R336–M347 the composition is skewed to basic and acidic residues. Polar residues predominate over residues S363–G372.

It belongs to the protease inhibitor I11 (ecotin) family.

The chain is Ecotin-like protein 3 from Leishmania major.